The following is a 195-amino-acid chain: Cbp/p300-interacting transactivator 1 (195 aa).

Disordered stretches follow at residues 1–24 (MPTM…NANP) and 51–149 (ASNG…SPAI). The span at 54–78 (GTKASGAPTSSSGSPSPISSSTATP) shows a compositional bias: low complexity. Residues 97-106 (MQLQKLNSQY) show a composition bias toward polar residues. Low complexity predominate over residues 137 to 148 (SLSPSAGAQSPA). Positions 160–169 (LMSLVVELGL) match the Nuclear export signal motif.

This sequence belongs to the CITED family. Interacts (via C-terminus) with CREBBP. Interacts with EGR2. Homodimer. Binds to RBM14. Interacts (via N-terminus) with HSPA8; the interaction suppresses the association of CITED1 with p300/CBP and SMAD-mediated transcription transactivation. Interacts (via C-terminus) with TOX3 (via HGM box); the interaction increases estrogen-response element (ERE)-dependent transcription and protection against cell death. Interacts with ESR1; the interaction occurs in a estrogen-dependent manner. Interacts (unphosphorylated form preferentially and via C-terminus) with EP300. Post-translationally, phosphorylated. Phosphorylation changes in a cell cycle-dependent manner and reduces its transcriptional cofactor activity.

It localises to the nucleus. It is found in the cytoplasm. In terms of biological role, transcriptional coactivator of the p300/CBP-mediated transcription complex. Enhances SMAD-mediated transcription by strengthening the functional link between the DNA-binding SMAD transcription factors and the p300/CBP transcription coactivator complex. Stimulates estrogen-dependent transactivation activity mediated by estrogen receptors signaling; stabilizes the interaction of estrogen receptor ESR1 and histone acetyltransferase EP300. Positively regulates TGF-beta signaling through its association with the SMAD/p300/CBP-mediated transcriptional coactivator complex. Induces transcription from estrogen-responsive promoters and protection against cell death. Potentiates EGR2-mediated transcriptional activation activity from the ERBB2 promoter. Acts as an inhibitor of osteoblastic mineralization through a cAMP-dependent parathyroid hormone receptor signaling. May play a role in pigmentation of melanocytes. Associates with chromatin to the estrogen-responsive TGF-alpha promoter region in a estrogen-dependent manner. This is Cbp/p300-interacting transactivator 1 (CITED1) from Bos taurus (Bovine).